We begin with the raw amino-acid sequence, 775 residues long: Meiotic driver SPOK2 (775 aa).

Residues 4-69 (KDRIAQLLRE…RCERERLQLE (66 aa)) are a coiled coil. Disordered regions lie at residues 18–51 (KAREEEAKARAEEAKARAEEAKARAEEAKAREEE), 211–249 (QKDDGSSGADDNTSDGSLERRQQAGPNKRPTSKRKYICS), 442–525 (LSSA…AMAD), and 734–761 (PPPKPRAVSRLSKPKRKRGDSEADAQLF). Positions 444–457 (SAPSSQNTDISEYT) are enriched in polar residues.

The protein localises to the cytoplasm. The protein resides in the nucleus. Functionally, promotes unequal transmission of alleles from the parental zygote to progeny spores by acting as poison/antidote system, leading to poisoning of progeny that do not inherit the allele. May possess DNA nuclease activity that leads to spore killing, and a kinase activity that confers resistance to the nuclease activity. The chain is Meiotic driver SPOK2 from Podospora anserina (strain S / ATCC MYA-4624 / DSM 980 / FGSC 10383) (Pleurage anserina).